The primary structure comprises 253 residues: ATP synthase subunit a (253 aa).

The next 6 helical transmembrane spans lie at 34 to 54 (SSLFLIIAVFLLLFWTSLSFY), 89 to 109 (YFPFIFTLHLLLLYCNLIGMI), 118 to 138 (HIVFTFGLALSIFIGINLIGI), 156 to 178 (LAIVPLLITIEFLSYIVKVFTLS), 203 to 223 (LSAGGLLAIFHLIPLALLLAL), and 226 to 246 (LELAIAGLQAYVFTLLTCIYL).

The protein belongs to the ATPase A chain family. In terms of assembly, F-type ATPases have 2 components, CF(1) - the catalytic core - and CF(0) - the membrane proton channel. CF(1) has five subunits: alpha(3), beta(3), gamma(1), delta(1), epsilon(1). CF(0) has three main subunits: a, b and c.

It localises to the mitochondrion inner membrane. In terms of biological role, mitochondrial membrane ATP synthase (F(1)F(0) ATP synthase or Complex V) produces ATP from ADP in the presence of a proton gradient across the membrane which is generated by electron transport complexes of the respiratory chain. F-type ATPases consist of two structural domains, F(1) - containing the extramembraneous catalytic core and F(0) - containing the membrane proton channel, linked together by a central stalk and a peripheral stalk. During catalysis, ATP synthesis in the catalytic domain of F(1) is coupled via a rotary mechanism of the central stalk subunits to proton translocation. Key component of the proton channel; it may play a direct role in the translocation of protons across the membrane. In Chondrus crispus (Carrageen Irish moss), this protein is ATP synthase subunit a (ATP6).